The primary structure comprises 101 residues: Large ribosomal subunit protein bL21 (101 aa).

This sequence belongs to the bacterial ribosomal protein bL21 family. Part of the 50S ribosomal subunit. Contacts protein L20.

In terms of biological role, this protein binds to 23S rRNA in the presence of protein L20. In Corynebacterium diphtheriae (strain ATCC 700971 / NCTC 13129 / Biotype gravis), this protein is Large ribosomal subunit protein bL21.